We begin with the raw amino-acid sequence, 245 residues long: Adenosylcobinamide-GDP ribazoletransferase (245 aa).

The next 5 membrane-spanning stretches (helical) occupy residues 31–51, 61–81, 113–133, 138–158, and 192–212; these read FGRA…VLYG, PLLQ…ALHL, AAVV…AALL, PGLL…LFLT, and LAFG…FAWL.

It belongs to the CobS family. Mg(2+) is required as a cofactor.

The protein resides in the cell inner membrane. The enzyme catalyses alpha-ribazole + adenosylcob(III)inamide-GDP = adenosylcob(III)alamin + GMP + H(+). The catalysed reaction is alpha-ribazole 5'-phosphate + adenosylcob(III)inamide-GDP = adenosylcob(III)alamin 5'-phosphate + GMP + H(+). It functions in the pathway cofactor biosynthesis; adenosylcobalamin biosynthesis; adenosylcobalamin from cob(II)yrinate a,c-diamide: step 7/7. Functionally, joins adenosylcobinamide-GDP and alpha-ribazole to generate adenosylcobalamin (Ado-cobalamin). Also synthesizes adenosylcobalamin 5'-phosphate from adenosylcobinamide-GDP and alpha-ribazole 5'-phosphate. The chain is Adenosylcobinamide-GDP ribazoletransferase from Pseudomonas paraeruginosa (strain DSM 24068 / PA7) (Pseudomonas aeruginosa (strain PA7)).